A 372-amino-acid polypeptide reads, in one-letter code: Formylglycine-generating enzyme (372 aa).

The first 31 residues, 1–31 (MAAPAREPALRCCIRLARVFLLLVLACEVAG), serve as a signal peptide directing secretion. C48 and C50 are disulfide-bonded. The tract at residues 61-80 (SSAAAQRYSREANAPGLTSG) is disordered. E128 contacts Ca(2+). The N-linked (GlcNAc...) asparagine glycan is linked to N139. 2 disulfides stabilise this stretch: C216-C363 and C233-C344. N257, I258, D271, F273, N291, G294, and E298 together coordinate Ca(2+). Cu(2+)-binding residues include C334 and C339. Residues 339 to 358 (CYRYRCAARSQNTPDSSASN) form an interaction with sulfatases region.

The protein belongs to the sulfatase-modifying factor family. In terms of assembly, monomer, homodimer and heterodimer with SUMF2. Requires Cu(2+) as cofactor. In terms of processing, N-glycosylated. Contains high-mannose-type oligosaccharides.

The protein resides in the endoplasmic reticulum lumen. It catalyses the reaction L-cysteinyl-[sulfatase] + 2 a thiol + O2 = an organic disulfide + 3-oxo-L-alanyl-[sulfatase] + hydrogen sulfide + H2O + H(+). It functions in the pathway protein modification; sulfatase oxidation. In terms of biological role, oxidase that catalyzes the conversion of cysteine to 3-oxoalanine on target proteins, using molecular oxygen and an unidentified reducing agent. 3-oxoalanine modification, which is also named formylglycine (fGly), occurs in the maturation of arylsulfatases and some alkaline phosphatases that use the hydrated form of 3-oxoalanine as a catalytic nucleophile. Known substrates include GALNS, ARSA, STS and ARSE. The polypeptide is Formylglycine-generating enzyme (Mus musculus (Mouse)).